A 149-amino-acid chain; its full sequence is Nucleoside diphosphate kinase (149 aa).

ATP-binding residues include K9, F57, R85, T91, R102, and N112. H115 functions as the Pros-phosphohistidine intermediate in the catalytic mechanism.

This sequence belongs to the NDK family. The cofactor is Mg(2+).

The protein resides in the cytoplasm. It catalyses the reaction a 2'-deoxyribonucleoside 5'-diphosphate + ATP = a 2'-deoxyribonucleoside 5'-triphosphate + ADP. The catalysed reaction is a ribonucleoside 5'-diphosphate + ATP = a ribonucleoside 5'-triphosphate + ADP. Major role in the synthesis of nucleoside triphosphates other than ATP. The ATP gamma phosphate is transferred to the NDP beta phosphate via a ping-pong mechanism, using a phosphorylated active-site intermediate. In Methanocorpusculum labreanum (strain ATCC 43576 / DSM 4855 / Z), this protein is Nucleoside diphosphate kinase.